Consider the following 228-residue polypeptide: PKHD-type hydroxylase XAC2942 (228 aa).

A Fe2OG dioxygenase domain is found at 78 to 180 (RIYPPLFNRY…RVACFFWAQS (103 aa)). Positions 96, 98, and 161 each coordinate Fe cation. 2-oxoglutarate is bound at residue Arg-171.

Requires Fe(2+) as cofactor. It depends on L-ascorbate as a cofactor.

This Xanthomonas axonopodis pv. citri (strain 306) protein is PKHD-type hydroxylase XAC2942.